Consider the following 398-residue polypeptide: Methionine import ATP-binding protein MetN 2 (398 aa).

The ABC transporter domain maps to 43-282 (VSLEQVGKVF…PRHGATRALL (240 aa)). Residue 79–86 (GRSGAGKS) participates in ATP binding.

This sequence belongs to the ABC transporter superfamily. Methionine importer (TC 3.A.1.24) family. The complex is composed of two ATP-binding proteins (MetN), two transmembrane proteins (MetI) and a solute-binding protein (MetQ).

It localises to the cell inner membrane. It carries out the reaction L-methionine(out) + ATP + H2O = L-methionine(in) + ADP + phosphate + H(+). The enzyme catalyses D-methionine(out) + ATP + H2O = D-methionine(in) + ADP + phosphate + H(+). In terms of biological role, part of the ABC transporter complex MetNIQ involved in methionine import. Responsible for energy coupling to the transport system. In Burkholderia lata (strain ATCC 17760 / DSM 23089 / LMG 22485 / NCIMB 9086 / R18194 / 383), this protein is Methionine import ATP-binding protein MetN 2.